The sequence spans 120 residues: UPF0102 protein Daro_0503 (120 aa).

Positions 1 to 20 (MQVKANDTTTARGREAEDRA) are disordered.

Belongs to the UPF0102 family.

This chain is UPF0102 protein Daro_0503, found in Dechloromonas aromatica (strain RCB).